Here is a 336-residue protein sequence, read N- to C-terminus: Holliday junction branch migration complex subunit RuvB (336 aa).

Residues 4–184 are large ATPase domain (RuvB-L); it reads ADRLISATGV…FGIVQRLEFY (181 aa). Residues I23, R24, G65, K68, T69, T70, 131–133, R174, Y184, and R221 contribute to the ATP site; that span reads EDY. T69 serves as a coordination point for Mg(2+). The interval 185 to 255 is small ATPAse domain (RuvB-S); it reads NVKDLTDIVS…IAARAMDMLD (71 aa). Positions 258–336 are head domain (RuvB-H); sequence NEGFDFMDRK…HFGLQRPDER (79 aa). Positions 313 and 318 each coordinate DNA.

This sequence belongs to the RuvB family. In terms of assembly, homohexamer. Forms an RuvA(8)-RuvB(12)-Holliday junction (HJ) complex. HJ DNA is sandwiched between 2 RuvA tetramers; dsDNA enters through RuvA and exits via RuvB. An RuvB hexamer assembles on each DNA strand where it exits the tetramer. Each RuvB hexamer is contacted by two RuvA subunits (via domain III) on 2 adjacent RuvB subunits; this complex drives branch migration. In the full resolvosome a probable DNA-RuvA(4)-RuvB(12)-RuvC(2) complex forms which resolves the HJ.

It is found in the cytoplasm. It catalyses the reaction ATP + H2O = ADP + phosphate + H(+). The RuvA-RuvB-RuvC complex processes Holliday junction (HJ) DNA during genetic recombination and DNA repair, while the RuvA-RuvB complex plays an important role in the rescue of blocked DNA replication forks via replication fork reversal (RFR). RuvA specifically binds to HJ cruciform DNA, conferring on it an open structure. The RuvB hexamer acts as an ATP-dependent pump, pulling dsDNA into and through the RuvAB complex. RuvB forms 2 homohexamers on either side of HJ DNA bound by 1 or 2 RuvA tetramers; 4 subunits per hexamer contact DNA at a time. Coordinated motions by a converter formed by DNA-disengaged RuvB subunits stimulates ATP hydrolysis and nucleotide exchange. Immobilization of the converter enables RuvB to convert the ATP-contained energy into a lever motion, pulling 2 nucleotides of DNA out of the RuvA tetramer per ATP hydrolyzed, thus driving DNA branch migration. The RuvB motors rotate together with the DNA substrate, which together with the progressing nucleotide cycle form the mechanistic basis for DNA recombination by continuous HJ branch migration. Branch migration allows RuvC to scan DNA until it finds its consensus sequence, where it cleaves and resolves cruciform DNA. The chain is Holliday junction branch migration complex subunit RuvB from Aeromonas salmonicida (strain A449).